The chain runs to 845 residues: Beta-galactosidase 11 (845 aa).

The first 26 residues, 1 to 26 (MRKHSLDRWLLTAVLVVLLSSSSSFA), serve as a signal peptide directing secretion. N-linked (GlcNAc...) asparagine glycosylation occurs at Asn104. Glu197 functions as the Proton donor in the catalytic mechanism. Glu268 (nucleophile) is an active-site residue. N-linked (GlcNAc...) asparagine glycans are attached at residues Asn269, Asn300, Asn395, Asn752, Asn784, and Asn814. The SUEL-type lectin domain occupies 751-840 (DNVSLTATLK…KMLAVQVKCG (90 aa)).

Belongs to the glycosyl hydrolase 35 family.

It localises to the secreted. The protein resides in the extracellular space. It is found in the apoplast. It carries out the reaction Hydrolysis of terminal non-reducing beta-D-galactose residues in beta-D-galactosides.. In Arabidopsis thaliana (Mouse-ear cress), this protein is Beta-galactosidase 11 (BGAL11).